Consider the following 92-residue polypeptide: Small ribosomal subunit protein uS19c (92 aa).

It belongs to the universal ribosomal protein uS19 family.

Its subcellular location is the plastid. It is found in the chloroplast. Its function is as follows. Protein S19 forms a complex with S13 that binds strongly to the 16S ribosomal RNA. This chain is Small ribosomal subunit protein uS19c, found in Lobularia maritima (Sweet alyssum).